A 412-amino-acid polypeptide reads, in one-letter code: Glucose-1-phosphate adenylyltransferase (412 aa).

Residues glycine 163, 179–180 (EK), and serine 197 each bind alpha-D-glucose 1-phosphate.

Belongs to the bacterial/plant glucose-1-phosphate adenylyltransferase family. In terms of assembly, homotetramer.

It carries out the reaction alpha-D-glucose 1-phosphate + ATP + H(+) = ADP-alpha-D-glucose + diphosphate. It functions in the pathway glycan biosynthesis; glycogen biosynthesis. Its function is as follows. Involved in the biosynthesis of ADP-glucose, a building block required for the elongation reactions to produce glycogen. Catalyzes the reaction between ATP and alpha-D-glucose 1-phosphate (G1P) to produce pyrophosphate and ADP-Glc. This chain is Glucose-1-phosphate adenylyltransferase, found in Frankia casuarinae (strain DSM 45818 / CECT 9043 / HFP020203 / CcI3).